We begin with the raw amino-acid sequence, 195 residues long: Pyridoxal 5'-phosphate synthase subunit PdxT (195 aa).

An L-glutamine-binding site is contributed by 46-48 (GES). The Nucleophile role is filled by Cys78. Residues Arg105 and 133–134 (IR) each bind L-glutamine. Active-site charge relay system residues include His169 and Glu171.

It belongs to the glutaminase PdxT/SNO family. In terms of assembly, in the presence of PdxS, forms a dodecamer of heterodimers. Only shows activity in the heterodimer.

The enzyme catalyses aldehydo-D-ribose 5-phosphate + D-glyceraldehyde 3-phosphate + L-glutamine = pyridoxal 5'-phosphate + L-glutamate + phosphate + 3 H2O + H(+). It carries out the reaction L-glutamine + H2O = L-glutamate + NH4(+). It functions in the pathway cofactor biosynthesis; pyridoxal 5'-phosphate biosynthesis. Catalyzes the hydrolysis of glutamine to glutamate and ammonia as part of the biosynthesis of pyridoxal 5'-phosphate. The resulting ammonia molecule is channeled to the active site of PdxS. The protein is Pyridoxal 5'-phosphate synthase subunit PdxT of Geobacillus thermodenitrificans (strain NG80-2).